The primary structure comprises 222 residues: Uracil-DNA glycosylase (222 aa).

The active-site Proton acceptor is Asp61.

It belongs to the uracil-DNA glycosylase (UDG) superfamily. UNG family.

The protein localises to the cytoplasm. It carries out the reaction Hydrolyzes single-stranded DNA or mismatched double-stranded DNA and polynucleotides, releasing free uracil.. Its function is as follows. Excises uracil residues from the DNA which can arise as a result of misincorporation of dUMP residues by DNA polymerase or due to deamination of cytosine. The sequence is that of Uracil-DNA glycosylase from Actinobacillus succinogenes (strain ATCC 55618 / DSM 22257 / CCUG 43843 / 130Z).